A 493-amino-acid polypeptide reads, in one-letter code: uncharacterized protein (493 aa).

At Ser-328 the chain carries Phosphoserine. The span at Ala-466 to Ser-486 shows a compositional bias: polar residues. Residues Ala-466–Thr-493 are disordered.

This is an uncharacterized protein from Schizosaccharomyces pombe (strain 972 / ATCC 24843) (Fission yeast).